The chain runs to 332 residues: L-lactate dehydrogenase C chain (332 aa).

Residues 29-57 and Arg99 contribute to the NAD(+) site; that span reads GAVGMACAICILLKDLADELALVDVAVDK. Arg106, Asn138, and Arg169 together coordinate substrate. Asn138 is an NAD(+) binding site. His193 (proton acceptor) is an active-site residue. Thr248 contributes to the substrate binding site. Ser301 bears the Phosphoserine mark.

It belongs to the LDH/MDH superfamily. LDH family. As to quaternary structure, homotetramer. Interacts with RABL2/RABL2A; binds preferentially to GTP-bound RABL2.

The protein resides in the cytoplasm. The catalysed reaction is (S)-lactate + NAD(+) = pyruvate + NADH + H(+). It participates in fermentation; pyruvate fermentation to lactate; (S)-lactate from pyruvate: step 1/1. In terms of biological role, possible role in sperm motility. The chain is L-lactate dehydrogenase C chain (LDHC) from Sus scrofa (Pig).